We begin with the raw amino-acid sequence, 426 residues long: Synaptotagmin-13 (426 aa).

Residues 1-6 are Vesicular-facing; that stretch reads MVLSVP. A helical transmembrane segment spans residues 7 to 29; sequence VIALGATLGTATSILALCGVTCL. At 30 to 426 the chain is on the cytoplasmic side; the sequence is CRHMHPKKGL…QIAMWHQLHL (397 aa). C2 domains are found at residues 158 to 275 and 287 to 422; these read QAPK…AQWG and GAGE…AMWH.

This sequence belongs to the synaptotagmin family. Interacts with NRXN1. In terms of tissue distribution, expressed in brain, heart, spleen, lung and testis.

It localises to the cytoplasmic vesicle membrane. Its function is as follows. May be involved in transport vesicle docking to the plasma membrane. The protein is Synaptotagmin-13 (Syt13) of Mus musculus (Mouse).